The sequence spans 208 residues: N-(5'-phosphoribosyl)anthranilate isomerase (208 aa).

Belongs to the TrpF family.

The catalysed reaction is N-(5-phospho-beta-D-ribosyl)anthranilate = 1-(2-carboxyphenylamino)-1-deoxy-D-ribulose 5-phosphate. It functions in the pathway amino-acid biosynthesis; L-tryptophan biosynthesis; L-tryptophan from chorismate: step 3/5. In Neisseria meningitidis serogroup A / serotype 4A (strain DSM 15465 / Z2491), this protein is N-(5'-phosphoribosyl)anthranilate isomerase.